Here is an 848-residue protein sequence, read N- to C-terminus: Paramyosin (848 aa).

The interval alanine 1–aspartate 9 is nonhelical region. Positions leucine 10–serine 833 form a coiled coil. The tract at residues valine 834 to leucine 848 is nonhelical region.

Belongs to the paramyosin family. Homodimer.

Its subcellular location is the cytoplasm. It localises to the myofibril. Functionally, paramyosin is a major structural component of many thick filaments isolated from invertebrate muscles. This Dirofilaria immitis (Canine heartworm) protein is Paramyosin.